The following is a 373-amino-acid chain: Gametogenetin-binding protein 1 (373 aa).

Disordered stretches follow at residues 26–113 (VGSK…GSQT) and 237–268 (KAQR…AVDE). The segment covering 36 to 49 (NRPLNRSQPSSSPE) has biased composition (polar residues). The interval 226-373 (LYKQLQKSAM…DEMGNWPPPE (148 aa)) is required for induction of mitochondrial fragmentation. Over residues 254 to 263 (SPTEERGERE) the composition is skewed to basic and acidic residues. Positions 301 to 373 (KTFRSTDTVG…DEMGNWPPPE (73 aa)) are interaction with GGN.

In terms of assembly, interacts with CCDC159. Interacts with GGN.

The protein localises to the cytoplasm. It is found in the membrane. The protein resides in the golgi apparatus. It localises to the mitochondrion intermembrane space. Functionally, induces mitochondrial fragmentation, possibly by promoting DNM1L-dependent fission and may play a role in mitochondrial morphogenesis during spermatogenesis. The protein is Gametogenetin-binding protein 1 (Ggnbp1) of Rattus norvegicus (Rat).